A 286-amino-acid chain; its full sequence is Diaminopimelate epimerase (286 aa).

Substrate is bound by residues asparagine 22, glutamine 56, and asparagine 76. Cysteine 85 serves as the catalytic Proton donor. Substrate is bound by residues 86–87 (GN), asparagine 169, asparagine 202, and 220–221 (ER). The active-site Proton acceptor is cysteine 229. A substrate-binding site is contributed by 230 to 231 (GS).

This sequence belongs to the diaminopimelate epimerase family. In terms of assembly, homodimer.

The protein localises to the cytoplasm. It catalyses the reaction (2S,6S)-2,6-diaminopimelate = meso-2,6-diaminopimelate. It functions in the pathway amino-acid biosynthesis; L-lysine biosynthesis via DAP pathway; DL-2,6-diaminopimelate from LL-2,6-diaminopimelate: step 1/1. Its function is as follows. Catalyzes the stereoinversion of LL-2,6-diaminopimelate (L,L-DAP) to meso-diaminopimelate (meso-DAP), a precursor of L-lysine and an essential component of the bacterial peptidoglycan. The chain is Diaminopimelate epimerase from Buchnera aphidicola subsp. Baizongia pistaciae (strain Bp).